We begin with the raw amino-acid sequence, 159 residues long: MSDEEHHFESKADAGASKTYPQQAGTIRKSGHIVIKNRPCKVVEVSTSKTGKHGHAKCHFVAIDIFTGKKLEDIVPSSHNCDVPHVNRTDYQLIDISEDGFVSLLTENGNTKDDLRLPTDDTLLAQVKDGFAEGKDLVLSVMSAMGEEQICGIKDIGPK.

Over residues 1–12 the composition is skewed to basic and acidic residues; sequence MSDEEHHFESKA. A disordered region spans residues 1–23; sequence MSDEEHHFESKADAGASKTYPQQ. Residue lysine 52 is modified to Hypusine.

It belongs to the eIF-5A family. In terms of processing, lys-52 undergoes hypusination, a unique post-translational modification that consists in the addition of a butylamino group from spermidine to lysine side chain, leading to the formation of the unusual amino acid hypusine. eIF-5As are the only known proteins to undergo this modification, which is essential for their function.

Functionally, translation factor that promotes translation elongation and termination, particularly upon ribosome stalling at specific amino acid sequence contexts. Binds between the exit (E) and peptidyl (P) site of the ribosome and promotes rescue of stalled ribosome: specifically required for efficient translation of polyproline-containing peptides as well as other motifs that stall the ribosome. Acts as a ribosome quality control (RQC) cofactor by joining the RQC complex to facilitate peptidyl transfer during CAT tailing step. This is Eukaryotic translation initiation factor 5A-5 (EIF5A5) from Solanum tuberosum (Potato).